We begin with the raw amino-acid sequence, 614 residues long: GPI transamidase component GAA1 (614 aa).

Over 1 to 19 (MALLEKLHRRIVDMGLVPR) the chain is Cytoplasmic. A helical membrane pass occupies residues 20–40 (IIALLPVISMLCALFGFISIA). Topologically, residues 41–356 (ILPMDGQYRR…APRQFVSISS (316 aa)) are lumenal. The N-linked (GlcNAc...) asparagine glycan is linked to Asn-87. A helical transmembrane segment spans residues 357 to 377 (YLPSAVALSIAFAISSLNAFI). Over 378–394 (NNAYANISLFSEYNLVA) the chain is Cytoplasmic. Residues 395 to 415 (LLVWFVSLVISFVVSQAFLLI) form a helical membrane-spanning segment. Topologically, residues 416 to 464 (PSSGLLMTISMASCFLPLILSRKIHISEPLSYRLKNVAFLYFSLVSTSL) are lumenal. The helical transmembrane segment at 465 to 485 (LMINFAMALLIGTLAFPMTFV) threads the bilayer. Topologically, residues 486 to 535 (KTIVESSSEHEVTTQSSNPIKTEPKDEIELVENHMDTTPATPQQQKQKLK) are cytoplasmic. Residues 536 to 556 (NLVLLILTNPFISITLFGLFF) traverse the membrane as a helical segment. The Lumenal segment spans residues 557-577 (DDEFHGFDIINKLVSAWLDLK). A helical transmembrane segment spans residues 578-598 (CWSWFVLCIGWLPCWLLILAS). At 599 to 614 (SFESKSVVVRSKEKQS) the chain is on the cytoplasmic side. Residues 610 to 614 (KEKQS) carry the Prevents secretion from ER motif.

In terms of assembly, forms a complex with CDC91, GPI17, GPI16 and GPI8.

The protein localises to the endoplasmic reticulum membrane. It functions in the pathway glycolipid biosynthesis; glycosylphosphatidylinositol-anchor biosynthesis. Its function is as follows. Component of the GPI transamidase complex. Required for a terminal step of GPI anchor attachment onto proteins. Affects endocytosis. This Saccharomyces cerevisiae (strain ATCC 204508 / S288c) (Baker's yeast) protein is GPI transamidase component GAA1 (GAA1).